A 441-amino-acid chain; its full sequence is Glutamate-1-semialdehyde 2,1-aminomutase (441 aa).

K276 carries the N6-(pyridoxal phosphate)lysine modification.

It belongs to the class-III pyridoxal-phosphate-dependent aminotransferase family. HemL subfamily. Homodimer. Requires pyridoxal 5'-phosphate as cofactor.

The protein resides in the cytoplasm. The catalysed reaction is (S)-4-amino-5-oxopentanoate = 5-aminolevulinate. Its pathway is porphyrin-containing compound metabolism; protoporphyrin-IX biosynthesis; 5-aminolevulinate from L-glutamyl-tRNA(Glu): step 2/2. This is Glutamate-1-semialdehyde 2,1-aminomutase from Rhodococcus jostii (strain RHA1).